A 211-amino-acid chain; its full sequence is Ras-related protein RABB1b (211 aa).

13–20 serves as a coordination point for GTP; the sequence is GDTGVGKS. Residues 35 to 43 carry the Effector region motif; the sequence is HDLTIGVEF. GTP-binding positions include 61-65, 119-122, and 149-150; these read DTAGQ, NKCD, and SA. S-geranylgeranyl cysteine attachment occurs at residues Cys209 and Cys210.

This sequence belongs to the small GTPase superfamily. Rab family.

It localises to the cell membrane. Functionally, intracellular vesicle trafficking and protein transport. This chain is Ras-related protein RABB1b (RABB1B), found in Arabidopsis thaliana (Mouse-ear cress).